The following is a 389-amino-acid chain: Formate-dependent phosphoribosylglycinamide formyltransferase (389 aa).

N(1)-(5-phospho-beta-D-ribosyl)glycinamide is bound by residues 15-16 (EL) and glutamate 75. Residues arginine 107, lysine 148, 153-158 (SSGKGQ), 188-191 (EEFL), and glutamate 196 each bind ATP. The region spanning 112–302 (NLAAGELGLR…EFDLHLRAVL (191 aa)) is the ATP-grasp domain. 2 residues coordinate Mg(2+): glutamate 261 and glutamate 273. Residues aspartate 280, lysine 350, and 357 to 358 (RR) contribute to the N(1)-(5-phospho-beta-D-ribosyl)glycinamide site.

It belongs to the PurK/PurT family. In terms of assembly, homodimer.

The catalysed reaction is N(1)-(5-phospho-beta-D-ribosyl)glycinamide + formate + ATP = N(2)-formyl-N(1)-(5-phospho-beta-D-ribosyl)glycinamide + ADP + phosphate + H(+). The protein operates within purine metabolism; IMP biosynthesis via de novo pathway; N(2)-formyl-N(1)-(5-phospho-D-ribosyl)glycinamide from N(1)-(5-phospho-D-ribosyl)glycinamide (formate route): step 1/1. Its function is as follows. Involved in the de novo purine biosynthesis. Catalyzes the transfer of formate to 5-phospho-ribosyl-glycinamide (GAR), producing 5-phospho-ribosyl-N-formylglycinamide (FGAR). Formate is provided by PurU via hydrolysis of 10-formyl-tetrahydrofolate. This chain is Formate-dependent phosphoribosylglycinamide formyltransferase, found in Synechococcus sp. (strain CC9311).